Consider the following 378-residue polypeptide: Chaperone protein DnaJ (378 aa).

In terms of domain architecture, J spans 3 to 67 (DYYDLLGVSK…QTRGRYDQFG (65 aa)). The CR-type zinc finger occupies 133-215 (GQEREIKIPH…CAGQGVRQVR (83 aa)). Zn(2+) contacts are provided by Cys146, Cys149, Cys163, Cys166, Cys189, Cys192, Cys203, and Cys206. CXXCXGXG motif repeat units lie at residues 146 to 153 (CDTCNGTG), 163 to 170 (CSTCGGVG), 189 to 196 (CPSCEGTG), and 203 to 210 (CPACAGQG).

Belongs to the DnaJ family. Homodimer. Requires Zn(2+) as cofactor.

The protein localises to the cytoplasm. In terms of biological role, participates actively in the response to hyperosmotic and heat shock by preventing the aggregation of stress-denatured proteins and by disaggregating proteins, also in an autonomous, DnaK-independent fashion. Unfolded proteins bind initially to DnaJ; upon interaction with the DnaJ-bound protein, DnaK hydrolyzes its bound ATP, resulting in the formation of a stable complex. GrpE releases ADP from DnaK; ATP binding to DnaK triggers the release of the substrate protein, thus completing the reaction cycle. Several rounds of ATP-dependent interactions between DnaJ, DnaK and GrpE are required for fully efficient folding. Also involved, together with DnaK and GrpE, in the DNA replication of plasmids through activation of initiation proteins. This Prochlorococcus marinus (strain MIT 9313) protein is Chaperone protein DnaJ.